The chain runs to 252 residues: Hydroxyacylglutathione hydrolase (252 aa).

Zn(2+)-binding residues include His54, His56, Asp58, His59, His113, Asp132, and His170.

It belongs to the metallo-beta-lactamase superfamily. Glyoxalase II family. As to quaternary structure, monomer. Zn(2+) is required as a cofactor.

It catalyses the reaction an S-(2-hydroxyacyl)glutathione + H2O = a 2-hydroxy carboxylate + glutathione + H(+). The protein operates within secondary metabolite metabolism; methylglyoxal degradation; (R)-lactate from methylglyoxal: step 2/2. Functionally, thiolesterase that catalyzes the hydrolysis of S-D-lactoyl-glutathione to form glutathione and D-lactic acid. The protein is Hydroxyacylglutathione hydrolase of Gloeobacter violaceus (strain ATCC 29082 / PCC 7421).